The following is a 325-amino-acid chain: MKRSLSGIQPSGILHIGNYFGAMKQFVDLQDSYDGFYFIADYHSLTSLTKAETLKENTYNIVLDYLAVGLDPSKSTIFLQSNVPEHTELTWLLSNITPVGLLERGHSYKDKIAKGIPSNTGLLTYPVLMAADILIYDSDVVPVGKDQKQHLEMTRDIAMKFNQQYGVEFFKLPEPLILDDSAIVPGTDGQKMSKSYNNTINMFATKKKLKEQVMSIVTDSTPLEEPKNPDNNIAKIYALFNNIDKQNELKDKFLAGNFGYGHAKTELLNSILEYFGTAREKREELEKNMDYVKDVLNEGSKKARTIAIEKIKKAKEIVGLVGNIY.

ATP contacts are provided by residues Gln-9–Ser-11 and Gly-17–Asn-18. The short motif at Pro-10–Asn-18 is the 'HIGH' region element. L-tryptophan is bound at residue Asp-132. Residues Gly-144 to Asp-146, Val-184, and Lys-191 to Ser-195 contribute to the ATP site. The 'KMSKS' region motif lies at Lys-191–Ser-195.

Belongs to the class-I aminoacyl-tRNA synthetase family. In terms of assembly, homodimer.

It localises to the cytoplasm. The catalysed reaction is tRNA(Trp) + L-tryptophan + ATP = L-tryptophyl-tRNA(Trp) + AMP + diphosphate + H(+). Catalyzes the attachment of tryptophan to tRNA(Trp). The polypeptide is Tryptophan--tRNA ligase (Fusobacterium nucleatum subsp. nucleatum (strain ATCC 25586 / DSM 15643 / BCRC 10681 / CIP 101130 / JCM 8532 / KCTC 2640 / LMG 13131 / VPI 4355)).